The chain runs to 164 residues: Phosphopantetheine adenylyltransferase (164 aa).

Ser11 lines the substrate pocket. ATP-binding positions include 11–12 (SF) and His19. 3 residues coordinate substrate: Lys43, Leu75, and Arg89. ATP-binding positions include 90-92 (GLR), Glu100, and 125-131 (YGYLSSS).

This sequence belongs to the bacterial CoaD family. Homohexamer. The cofactor is Mg(2+).

Its subcellular location is the cytoplasm. The enzyme catalyses (R)-4'-phosphopantetheine + ATP + H(+) = 3'-dephospho-CoA + diphosphate. It functions in the pathway cofactor biosynthesis; coenzyme A biosynthesis; CoA from (R)-pantothenate: step 4/5. In terms of biological role, reversibly transfers an adenylyl group from ATP to 4'-phosphopantetheine, yielding dephospho-CoA (dPCoA) and pyrophosphate. The chain is Phosphopantetheine adenylyltransferase from Geobacter sulfurreducens (strain ATCC 51573 / DSM 12127 / PCA).